The primary structure comprises 756 residues: ATP-dependent DNA helicase Hel308 (756 aa).

Residues Gln-29 and 47–54 (SATASGKT) each bind ATP. Positions 34–201 (RAGLLNGENI…WLNAKLVKSD (168 aa)) constitute a Helicase ATP-binding domain. Residues 146 to 149 (DEIH) carry the DEAH box motif. One can recognise a Helicase C-terminal domain in the interval 233 to 435 (SLINLTVDTL…PTSLKFHTLS (203 aa)).

The protein belongs to the helicase family. Hel308 subfamily. Monomer.

The catalysed reaction is Couples ATP hydrolysis with the unwinding of duplex DNA by translocating in the 3'-5' direction.. It carries out the reaction ATP + H2O = ADP + phosphate + H(+). DNA-dependent ATPase and 3'-5' DNA helicase that may be involved in repair of stalled replication forks. The chain is ATP-dependent DNA helicase Hel308 from Caldivirga maquilingensis (strain ATCC 700844 / DSM 13496 / JCM 10307 / IC-167).